We begin with the raw amino-acid sequence, 78 residues long: Translation initiation factor IF-1, chloroplastic (78 aa).

The S1-like domain maps to 1 to 72 (MKKQNLIEME…TKGRITYRLR (72 aa)).

The protein belongs to the IF-1 family. As to quaternary structure, component of the 30S ribosomal translation pre-initiation complex which assembles on the 30S ribosome in the order IF-2 and IF-3, IF-1 and N-formylmethionyl-tRNA(fMet); mRNA recruitment can occur at any time during PIC assembly.

It localises to the plastid. The protein localises to the chloroplast. In terms of biological role, one of the essential components for the initiation of protein synthesis. Stabilizes the binding of IF-2 and IF-3 on the 30S subunit to which N-formylmethionyl-tRNA(fMet) subsequently binds. Helps modulate mRNA selection, yielding the 30S pre-initiation complex (PIC). Upon addition of the 50S ribosomal subunit IF-1, IF-2 and IF-3 are released leaving the mature 70S translation initiation complex. The sequence is that of Translation initiation factor IF-1, chloroplastic from Chaetosphaeridium globosum (Charophycean green alga).